A 315-amino-acid chain; its full sequence is Methenyltetrahydromethanopterin cyclohydrolase (315 aa).

It belongs to the MCH family.

The protein resides in the cytoplasm. The enzyme catalyses 5,10-methenyl-5,6,7,8-tetrahydromethanopterin + H2O = N(5)-formyl-5,6,7,8-tetrahydromethanopterin + H(+). It functions in the pathway one-carbon metabolism; methanogenesis from CO(2); 5,10-methenyl-5,6,7,8-tetrahydromethanopterin from CO(2): step 3/3. Its function is as follows. Catalyzes the reversible interconversion of 5-formyl-H(4)MPT to methenyl-H(4)MPT(+). The protein is Methenyltetrahydromethanopterin cyclohydrolase of Methanosphaerula palustris (strain ATCC BAA-1556 / DSM 19958 / E1-9c).